Here is a 333-residue protein sequence, read N- to C-terminus: Threonine-phosphate decarboxylase (333 aa).

The residue at position 199 (Lys-199) is an N6-(pyridoxal phosphate)lysine.

Belongs to the class-I pyridoxal-phosphate-dependent aminotransferase family. Homodimer. The cofactor is pyridoxal 5'-phosphate.

The protein localises to the cytoplasm. The catalysed reaction is O-phospho-L-threonine + H(+) = (R)-1-aminopropan-2-yl phosphate + CO2. It participates in cofactor biosynthesis; adenosylcobalamin biosynthesis. Functionally, decarboxylates L-threonine-O-3-phosphate to yield (R)-1-amino-2-propanol O-2-phosphate, the precursor for the linkage between the nucleotide loop and the corrin ring in cobalamin. The protein is Threonine-phosphate decarboxylase (cobC) of Sinorhizobium sp.